A 440-amino-acid polypeptide reads, in one-letter code: Ribosomal protein uS12 methylthiotransferase RimO (440 aa).

Residues 5–116 (PTIAISHLGC…IVSVIERAEQ (112 aa)) form the MTTase N-terminal domain. C14, C50, C79, C154, C158, and C161 together coordinate [4Fe-4S] cluster. In terms of domain architecture, Radical SAM core spans 140-370 (TTTEGVAYLR…ALQQPISWRK (231 aa)). In terms of domain architecture, TRAM spans 372-438 (QQEVGKTVEV…EYDLFGQVVS (67 aa)).

Belongs to the methylthiotransferase family. RimO subfamily. The cofactor is [4Fe-4S] cluster.

It localises to the cytoplasm. The enzyme catalyses L-aspartate(89)-[ribosomal protein uS12]-hydrogen + (sulfur carrier)-SH + AH2 + 2 S-adenosyl-L-methionine = 3-methylsulfanyl-L-aspartate(89)-[ribosomal protein uS12]-hydrogen + (sulfur carrier)-H + 5'-deoxyadenosine + L-methionine + A + S-adenosyl-L-homocysteine + 2 H(+). Functionally, catalyzes the methylthiolation of an aspartic acid residue of ribosomal protein uS12. The sequence is that of Ribosomal protein uS12 methylthiotransferase RimO from Nostoc sp. (strain PCC 7120 / SAG 25.82 / UTEX 2576).